Here is a 282-residue protein sequence, read N- to C-terminus: Pantothenate synthetase (282 aa).

30 to 37 (MGYLHEGH) contributes to the ATP binding site. The active-site Proton donor is H37. Residue Q61 participates in (R)-pantoate binding. Residue Q61 participates in beta-alanine binding. 147-150 (GMKD) serves as a coordination point for ATP. Q153 provides a ligand contact to (R)-pantoate. ATP contacts are provided by residues V176 and 184–187 (KSSR).

This sequence belongs to the pantothenate synthetase family. Homodimer.

It localises to the cytoplasm. It catalyses the reaction (R)-pantoate + beta-alanine + ATP = (R)-pantothenate + AMP + diphosphate + H(+). Its pathway is cofactor biosynthesis; (R)-pantothenate biosynthesis; (R)-pantothenate from (R)-pantoate and beta-alanine: step 1/1. In terms of biological role, catalyzes the condensation of pantoate with beta-alanine in an ATP-dependent reaction via a pantoyl-adenylate intermediate. The sequence is that of Pantothenate synthetase from Bacillus mycoides (strain KBAB4) (Bacillus weihenstephanensis).